The primary structure comprises 25 residues: Ocellatin-K1 (25 aa).

Isoleucine amide is present on isoleucine 25.

Expressed by the skin glands.

Its subcellular location is the secreted. Its function is as follows. Has hemolytic and antibacterial activity. The sequence is that of Ocellatin-K1 from Leptodactylus knudseni (Knudsen's thin-toed frog).